The chain runs to 90 residues: UPF0386 protein Rru_A2144 (90 aa).

This sequence belongs to the UPF0386 family.

The chain is UPF0386 protein Rru_A2144 from Rhodospirillum rubrum (strain ATCC 11170 / ATH 1.1.1 / DSM 467 / LMG 4362 / NCIMB 8255 / S1).